We begin with the raw amino-acid sequence, 388 residues long: Galactokinase (388 aa).

Residue 33-36 (EHTD) participates in substrate binding. ATP is bound by residues S67 and 125-131 (GSGLSSS). 2 residues coordinate Mg(2+): S131 and E163. D175 (proton acceptor) is an active-site residue. Substrate is bound at residue Y225.

The protein belongs to the GHMP kinase family. GalK subfamily.

It is found in the cytoplasm. The enzyme catalyses alpha-D-galactose + ATP = alpha-D-galactose 1-phosphate + ADP + H(+). The protein operates within carbohydrate metabolism; galactose metabolism. Its function is as follows. Catalyzes the transfer of the gamma-phosphate of ATP to D-galactose to form alpha-D-galactose-1-phosphate (Gal-1-P). The protein is Galactokinase of Lactobacillus helveticus (Lactobacillus suntoryeus).